A 233-amino-acid polypeptide reads, in one-letter code: 5'-methylthioadenosine/S-adenosylhomocysteine nucleosidase (233 aa).

Residue Glu-12 is the Proton acceptor of the active site. Substrate-binding positions include Gly-78, Ile-153, and 174-175 (ME). Asp-198 functions as the Proton donor in the catalytic mechanism.

It belongs to the PNP/UDP phosphorylase family. MtnN subfamily.

The enzyme catalyses S-adenosyl-L-homocysteine + H2O = S-(5-deoxy-D-ribos-5-yl)-L-homocysteine + adenine. It catalyses the reaction S-methyl-5'-thioadenosine + H2O = 5-(methylsulfanyl)-D-ribose + adenine. It carries out the reaction 5'-deoxyadenosine + H2O = 5-deoxy-D-ribose + adenine. It functions in the pathway amino-acid biosynthesis; L-methionine biosynthesis via salvage pathway; S-methyl-5-thio-alpha-D-ribose 1-phosphate from S-methyl-5'-thioadenosine (hydrolase route): step 1/2. In terms of biological role, catalyzes the irreversible cleavage of the glycosidic bond in both 5'-methylthioadenosine (MTA) and S-adenosylhomocysteine (SAH/AdoHcy) to adenine and the corresponding thioribose, 5'-methylthioribose and S-ribosylhomocysteine, respectively. Also cleaves 5'-deoxyadenosine, a toxic by-product of radical S-adenosylmethionine (SAM) enzymes, into 5-deoxyribose and adenine. In Exiguobacterium sp. (strain ATCC BAA-1283 / AT1b), this protein is 5'-methylthioadenosine/S-adenosylhomocysteine nucleosidase.